The sequence spans 112 residues: uncharacterized protein (112 aa).

This is an uncharacterized protein from Acanthamoeba polyphaga mimivirus (APMV).